The chain runs to 260 residues: Ubiquinone/menaquinone biosynthesis C-methyltransferase UbiE (260 aa).

Residues Thr83, Asp104, 132–133 (NA), and Ser149 contribute to the S-adenosyl-L-methionine site.

This sequence belongs to the class I-like SAM-binding methyltransferase superfamily. MenG/UbiE family.

It carries out the reaction a 2-demethylmenaquinol + S-adenosyl-L-methionine = a menaquinol + S-adenosyl-L-homocysteine + H(+). The catalysed reaction is a 2-methoxy-6-(all-trans-polyprenyl)benzene-1,4-diol + S-adenosyl-L-methionine = a 5-methoxy-2-methyl-3-(all-trans-polyprenyl)benzene-1,4-diol + S-adenosyl-L-homocysteine + H(+). Its pathway is quinol/quinone metabolism; menaquinone biosynthesis; menaquinol from 1,4-dihydroxy-2-naphthoate: step 2/2. The protein operates within cofactor biosynthesis; ubiquinone biosynthesis. Methyltransferase required for the conversion of demethylmenaquinol (DMKH2) to menaquinol (MKH2) and the conversion of 2-polyprenyl-6-methoxy-1,4-benzoquinol (DDMQH2) to 2-polyprenyl-3-methyl-6-methoxy-1,4-benzoquinol (DMQH2). The chain is Ubiquinone/menaquinone biosynthesis C-methyltransferase UbiE from Vibrio cholerae serotype O1 (strain ATCC 39315 / El Tor Inaba N16961).